A 564-amino-acid polypeptide reads, in one-letter code: 2-succinyl-5-enolpyruvyl-6-hydroxy-3-cyclohexene-1-carboxylate synthase (564 aa).

This sequence belongs to the TPP enzyme family. MenD subfamily. Homodimer. The cofactor is Mg(2+). Mn(2+) serves as cofactor. It depends on thiamine diphosphate as a cofactor.

The enzyme catalyses isochorismate + 2-oxoglutarate + H(+) = 5-enolpyruvoyl-6-hydroxy-2-succinyl-cyclohex-3-ene-1-carboxylate + CO2. It functions in the pathway quinol/quinone metabolism; 1,4-dihydroxy-2-naphthoate biosynthesis; 1,4-dihydroxy-2-naphthoate from chorismate: step 2/7. It participates in quinol/quinone metabolism; menaquinone biosynthesis. Catalyzes the thiamine diphosphate-dependent decarboxylation of 2-oxoglutarate and the subsequent addition of the resulting succinic semialdehyde-thiamine pyrophosphate anion to isochorismate to yield 2-succinyl-5-enolpyruvyl-6-hydroxy-3-cyclohexene-1-carboxylate (SEPHCHC). In Vibrio vulnificus (strain CMCP6), this protein is 2-succinyl-5-enolpyruvyl-6-hydroxy-3-cyclohexene-1-carboxylate synthase.